We begin with the raw amino-acid sequence, 340 residues long: Phosphoribosylformylglycinamidine cyclo-ligase (340 aa).

The protein belongs to the AIR synthase family.

The protein resides in the cytoplasm. It carries out the reaction 2-formamido-N(1)-(5-O-phospho-beta-D-ribosyl)acetamidine + ATP = 5-amino-1-(5-phospho-beta-D-ribosyl)imidazole + ADP + phosphate + H(+). Its pathway is purine metabolism; IMP biosynthesis via de novo pathway; 5-amino-1-(5-phospho-D-ribosyl)imidazole from N(2)-formyl-N(1)-(5-phospho-D-ribosyl)glycinamide: step 2/2. The sequence is that of Phosphoribosylformylglycinamidine cyclo-ligase from Streptococcus pyogenes serotype M18 (strain MGAS8232).